A 975-amino-acid polypeptide reads, in one-letter code: DNA primase (975 aa).

The CHC2-type zinc-finger motif lies at 919-958 (CIQHDHRDGRENVQFFLDFRPESATTIWTTLWSRCFSRKC).

The protein belongs to the herpesviridae DNA primase family. As to quaternary structure, associates with the helicase and the primase-associated factor to form the helicase-primase factor.

The protein localises to the host nucleus. In terms of biological role, essential component of the helicase/primase complex. Unwinds the DNA at the replication forks and generates single-stranded DNA for both leading and lagging strand synthesis. The primase initiates primer synthesis and thereby produces large amount of short RNA primers on the lagging strand that the polymerase elongates using dNTPs. In Elephas maximus (Indian elephant), this protein is DNA primase.